A 364-amino-acid polypeptide reads, in one-letter code: tRNA/tmRNA (uracil-C(5))-methyltransferase (364 aa).

Positions 189, 216, 221, 237, and 297 each coordinate S-adenosyl-L-methionine. The active-site Nucleophile is the cysteine 322. Glutamate 356 functions as the Proton acceptor in the catalytic mechanism.

Belongs to the class I-like SAM-binding methyltransferase superfamily. RNA M5U methyltransferase family. TrmA subfamily.

It carries out the reaction uridine(54) in tRNA + S-adenosyl-L-methionine = 5-methyluridine(54) in tRNA + S-adenosyl-L-homocysteine + H(+). The enzyme catalyses uridine(341) in tmRNA + S-adenosyl-L-methionine = 5-methyluridine(341) in tmRNA + S-adenosyl-L-homocysteine + H(+). Its function is as follows. Dual-specificity methyltransferase that catalyzes the formation of 5-methyluridine at position 54 (m5U54) in all tRNAs, and that of position 341 (m5U341) in tmRNA (transfer-mRNA). This chain is tRNA/tmRNA (uracil-C(5))-methyltransferase, found in Campylobacter curvus (strain 525.92).